Reading from the N-terminus, the 414-residue chain is Aspartic protease-like protein pynH (414 aa).

An N-terminal signal peptide occupies residues Met-1–Ala-19. One can recognise a Peptidase A1 domain in the interval Phe-43 to Ala-410. 11 N-linked (GlcNAc...) asparagine glycosylation sites follow: Asn-93, Asn-102, Asn-140, Asn-151, Asn-173, Asn-202, Asn-221, Asn-258, Asn-272, Asn-335, and Asn-366. A disulfide bond links Cys-333 and Cys-371.

It belongs to the peptidase A1 family.

It participates in secondary metabolite biosynthesis. In terms of biological role, aspartic protease-like protein; part of the gene cluster that mediates the biosynthesis of pyranonigrins, a family of antioxidative compounds. The first step of pyranonigrins biosynthesis is performed by the hybrid PKS-NRPS synthetase that condenses 6 malonyl-CoA units to an acetyl starter unit, to form a 1,3,5-trioxotetradecane-6,8-dienyl-ACP. The enoyl reductase (ER) domain of pynA is likely to be functional during the first two rounds of polyketide chain extension, to generate the saturated C-C bonds of the alkyl side chain. PynA subsequently forms the amide bond between the acyl chain and L-serine. Although pynA has a terminal reductase domain, it appears to require the thioesterase pynI for the release of the straight-chain intermediate from pynA via the formation of a tetramic acid pyranonigrin J. The methyltransferase pynC then coverts pyranonigrin J to pyranonigrin I via N-methylation. The FAD-dependent monooxygenase pynG catalyzes an epoxidation-mediated cyclization to form the dihydro-gamma-pyrone moiety, followed by pynD-catalyzed oxidation of the alcohol to the ketone and enolization to yield the characteristic tetramic acid-fused gamma-pyrone core of pyranonigrin H. Pyranonigrin H is substrate of pynH for dehydration-mediated exo-methylene formation from the serine side chain to produce pyranonigrin E, before the oxidase pynE reduces the exo-methylene of pyranonigrin E into a pendant methyl to form pyranonigrin G. The FAD-linked oxidoreductase pynB performs the reverse reaction and converts pyranonigrin G back to pyranonigrin E. The chain is Aspartic protease-like protein pynH from Aspergillus niger (strain ATCC MYA-4892 / CBS 513.88 / FGSC A1513).